A 231-amino-acid polypeptide reads, in one-letter code: Uracil-DNA glycosylase (231 aa).

The Proton acceptor role is filled by D74.

It belongs to the uracil-DNA glycosylase (UDG) superfamily. UNG family.

The protein resides in the cytoplasm. The catalysed reaction is Hydrolyzes single-stranded DNA or mismatched double-stranded DNA and polynucleotides, releasing free uracil.. Functionally, excises uracil residues from the DNA which can arise as a result of misincorporation of dUMP residues by DNA polymerase or due to deamination of cytosine. This chain is Uracil-DNA glycosylase, found in Campylobacter jejuni subsp. jejuni serotype O:6 (strain 81116 / NCTC 11828).